The primary structure comprises 304 residues: PTB domain-containing engulfment adapter protein 1 (304 aa).

Threonine 16 is subject to Phosphothreonine. Residues serine 21–leucine 176 form the PID domain. Residues aspartate 159–serine 200 are a coiled coil. Residue serine 223 is modified to Phosphoserine.

The protein belongs to the ced-6 family. In terms of assembly, homodimer. Interacts with clathrin and MEGF10. Interacts with GDP-bound ARF6, but not with GTP-bound ARF6. Part of a complex composed of GULP1, ACAP1 and ARF6. Interacts with ACAP1, LRP1 and STAB2. As to expression, detected throughout the brain, particularly in Purkinje cells, hippocampal and cortical neurons (at protein level).

The protein localises to the cytoplasm. Functionally, modulates cellular glycosphingolipid and cholesterol transport. May play a role in the internalization of various LRP1 ligands, such as PSAP. May function as an adapter protein. Required for efficient phagocytosis of apoptotic cells. Increases cellular levels of GTP-bound ARF6. This Mus musculus (Mouse) protein is PTB domain-containing engulfment adapter protein 1 (Gulp1).